Here is a 127-residue protein sequence, read N- to C-terminus: Copper resistance protein C (127 aa).

The signal sequence occupies residues 1–25 (MFAFRSIATTVVMVAASLASASAFA). Cu cation-binding residues include H26, M65, M68, M71, M76, and H116.

This sequence belongs to the CopC family.

It is found in the periplasm. In terms of biological role, copper-binding protein involved in copper resistance. This chain is Copper resistance protein C, found in Xanthomonas campestris pv. juglandis (Xanthomonas arboricola pv. juglandis).